We begin with the raw amino-acid sequence, 95 residues long: Osteocalcin-related protein (95 aa).

Positions 1 to 23 (MRTLSLLTLLALAALCLSDLTDA) are cleaved as a signal peptide. The propeptide occupies 24-49 (TPTGPESDKAFMSKQEGNKVVNRLRR). One can recognise a Gla domain in the interval 46-92 (RLRRYLGASVPSPDPLEPTRELCELDPACDELSNQYGLKTAYRRIYG). Glu62, Glu66, Glu69, and Asp75 together coordinate Ca(2+). 2 positions are modified to 4-carboxyglutamate: Glu66 and Glu69. A disulfide bridge connects residues Cys68 and Cys74.

This sequence belongs to the osteocalcin/matrix Gla protein family. Post-translationally, gamma-carboxyglutamic acid residues are formed by vitamin K dependent carboxylation. These residues are essential for the binding of calcium. As to expression, expressed in kidney and lung, but not in bone.

It localises to the secreted. Binds strongly to apatite and calcium. The polypeptide is Osteocalcin-related protein (Mus musculus (Mouse)).